Consider the following 193-residue polypeptide: C-type lectin domain family 3 member A homolog (193 aa).

An N-terminal signal peptide occupies residues 1-24 (MAQAGLLIWLFFTILLLDLTCTQS). 3 cysteine pairs are disulfide-bonded: cysteine 66–cysteine 76, cysteine 93–cysteine 188, and cysteine 164–cysteine 180. A C-type lectin domain is found at 72–189 (IHKKCYLSFE…CRSLKKYICE (118 aa)).

Its subcellular location is the secreted. In Xenopus laevis (African clawed frog), this protein is C-type lectin domain family 3 member A homolog (clec3a).